Reading from the N-terminus, the 196-residue chain is MAKSKYYVVWNGRKPGIYTSWSACEAQVKGYTGAKFKSYPSKEEAEAAFRGEEATPKLAKEEIIWESLSVDVGSQGNPGIVEYKGVDTKTGEVLFEREPIPIGTNNMGEFLAIVHGLRYLKERNSRKPIYSDSQTAIKWVKDKKAKSTLVRNEETALIWKLVDEAEEWLNTHTYETPILKWQTDKWGEIKADYGRK.

The RNase H type-1 domain occupies 58–196 (LAKEEIIWES…GEIKADYGRK (139 aa)). Residues D71, E109, D132, and D192 each coordinate Mg(2+).

It belongs to the RNase H family. Mn(2+) is required as a cofactor. The cofactor is Mg(2+).

It is found in the cytoplasm. The enzyme catalyses Endonucleolytic cleavage to 5'-phosphomonoester.. Its function is as follows. Endonuclease that specifically degrades the RNA of RNA-DNA hybrids. This chain is Ribonuclease H (rnhA), found in Halalkalibacterium halodurans (strain ATCC BAA-125 / DSM 18197 / FERM 7344 / JCM 9153 / C-125) (Bacillus halodurans).